The following is a 482-amino-acid chain: Histone deacetylase 1 (482 aa).

The tract at residues 9–321 (RKVCYYYDGD…WTYETAVALD (313 aa)) is histone deacetylase. Residues glycine 27 and lysine 31 each coordinate 1D-myo-inositol 1,4,5,6-tetrakisphosphate. Lysine 74 bears the N6-acetyllysine; alternate mark. Lysine 74 is covalently cross-linked (Glycyl lysine isopeptide (Lys-Gly) (interchain with G-Cter in SUMO2); alternate). Histidine 141 is a catalytic residue. Residues aspartate 176 and histidine 178 each contribute to the Zn(2+) site. The residue at position 220 (lysine 220) is an N6-acetyllysine. Cysteine 261 bears the S-nitrosocysteine mark. Residue aspartate 264 participates in Zn(2+) binding. Residue arginine 270 participates in 1D-myo-inositol 1,4,5,6-tetrakisphosphate binding. At cysteine 273 the chain carries S-nitrosocysteine. Over residues 390 to 400 (PEESGDEDEED) the composition is skewed to acidic residues. Residues 390 to 482 (PEESGDEDEE…KGVKEEVKLA (93 aa)) form a disordered region. Phosphoserine is present on residues serine 393, serine 406, serine 409, serine 421, and serine 423. Basic and acidic residues predominate over residues 401–416 (PDKRISICSSDKRIAC). Residues 417–427 (EEEFSDSDEEG) show a composition bias toward acidic residues. An N6-methylated lysine; by EHMT2 modification is found at lysine 432. A Glycyl lysine isopeptide (Lys-Gly) (interchain with G-Cter in SUMO2) cross-link involves residue lysine 438. The segment covering 443-482 (VKTEDEKEKDPEEKKEVTEEEKTKEEKQEAKGVKEEVKLA) has biased composition (basic and acidic residues). A Glycyl lysine isopeptide (Lys-Gly) (interchain with G-Cter in SUMO2); alternate cross-link involves residue lysine 444. Residue lysine 444 forms a Glycyl lysine isopeptide (Lys-Gly) (interchain with G-Cter in SUMO); alternate linkage. Residues lysine 456, lysine 457, and lysine 473 each participate in a glycyl lysine isopeptide (Lys-Gly) (interchain with G-Cter in SUMO2) cross-link. Residue lysine 476 forms a Glycyl lysine isopeptide (Lys-Gly) (interchain with G-Cter in SUMO2); alternate linkage. Residue lysine 476 forms a Glycyl lysine isopeptide (Lys-Gly) (interchain with G-Cter in SUMO); alternate linkage. Residue lysine 480 forms a Glycyl lysine isopeptide (Lys-Gly) (interchain with G-Cter in SUMO2) linkage.

This sequence belongs to the histone deacetylase family. HD type 1 subfamily. Part of the core histone deacetylase (HDAC) complex composed of HDAC1, HDAC2, RBBP4 and RBBP7, the core complex associates with SIN3, SAP18 and SAP30 to form the SIN3 HDAC complex. Component of the nucleosome remodeling and deacetylase (NuRD) repressor complex, composed of core proteins MTA1, MTA2, MTA3, RBBP4, RBBP7, HDAC1, HDAC2, MBD2, MBD3, and peripherally associated proteins CDK2AP1, CDK2AP2, GATAD2A, GATAD2B, CHD3, CHD4 and CHD5. The exact stoichiometry of the NuRD complex is unknown, and some subunits such as MBD2 and MBD3, GATAD2A and GATAD2B, and CHD3, CHD4 and CHD5 define mutually exclusive NuRD complexes. Component of a BHC histone deacetylase complex that contains HDAC1, HDAC2, HMG20B/BRAF35, KDM1A, RCOR1/CoREST and PHF21A/BHC80. The BHC complex may also contain ZMYM2, ZNF217, ZMYM3, GSE1 and GTF2I. Component of a mSin3A corepressor complex that contains SIN3A, SAP130, SUDS3/SAP45, ARID4B/SAP180, HDAC1 and HDAC2. Found in a trimeric complex with APBB1 and TSHZ3; the interaction between HDAC1 and APBB1 is mediated by TSHZ3. Forms a complex comprising APPL1, RUVBL2, APPL2, CTNNB1 and HDAC2. Component of a RCOR/GFI/KDM1A/HDAC complex. Part of a complex composed of TRIM28, HDAC1, HDAC2 and EHMT2. Part of a complex containing at least CDYL, MIER1, MIER2, HDAC1 and HDAC2. The large PER complex involved in the histone deacetylation is composed of at least HDAC1, PER2, SFPQ and SIN3A. Associates with the 9-1-1 complex; interacts with HUS1. Found in a complex with DNMT3A and HDAC7. Found in a complex with YY1, SIN3A and GON4L. Identified in a histone deacetylase complex that contains DNTTIP1, HDAC1 and MIDEAS; this complex assembles into a tetramer that contains four copies of each protein chain. Found in a complex composed of at least SINHCAF, SIN3A, HDAC1, SAP30, RBBP4, OGT and TET1. Component of the SIN3B complex, which includes SIN3B, HDAC1, PHF12 and MORF4L1. Interacts with GFI1; the interaction is direct. Interacts directly with GFI1B. Interacts with TSHZ3 (via N-terminus); the interaction is direct. Interacts with APEX1; the interaction is not dependent on the acetylated status of APEX1. Interacts with BANP. Interacts with BAZ2A/TIP5. Interacts with BCL6. Interacts with BCOR. Interacts with BHLHE40/DEC1. Interacts with BRCC3; this interaction is enhanced in the presence of PWWP2B. Interacts with BRMS1. Interacts with BRMS1L. Interacts with C10orf90/FATS (via its N-terminal); the interaction prevents binding of HDAC1 to CDKN1A/p21 and facilitates the acetylation and stabilization of CDKN1A/p21. Interacts with CBFA2T3. Interacts with CCAR2. Interacts with CDK2AP1. Interacts with CHD3. Interacts with CHD4. Interacts with CHFR. Interacts with CIART. Interacts with CDKN1A/p21. Interacts with CDK5 complexed to CDK5R1 (p25). Interacts with CRY1. Interacts with DAXX. Interacts with DDIT3/CHOP. Interacts with DDX5. Interacts with DHX36; this interaction occurs in a RNA-dependent manner. Interacts with DNMT1. Interacts with DNTTIP1. Interacts with E4F1. Interacts with EP300. Interacts with ERCC6. Interacts with GATAD2A. Interacts with HCFC1. Interacts with HDAC9. Interacts with HUS1. Interacts with INSM1. Interacts with KDM4A. Interacts with KDM5A; this interaction impairs histone deacetylation. Interacts with KDM5B. Interacts with KLF1. Interacts with MBD3L2. Interacts with MIER1. Interacts with NFE4. Interacts with NR4A2/NURR1. Interacts with NR1D2 (via C-terminus). Interacts with NRIP1. Interacts with NSD2. Interacts with PACS2. Interacts with PHB2. Interacts with PPHLN1. Interacts with PRDM6. Interacts with PRDM16. Interacts with PWWP2A in a MTA1-dependent manner. Interacts with PWWP2B. Interacts with RB1. Interacts with RERE. Interacts with SANBR (via the BTB domain). Interacts with SAMSN1. Interacts with SAP30L. Interacts with SETDB1. Interacts with SIN3A. Interacts with SMAD3. Interacts with SMAD4; positively regulated by ZBTB7A. Interacts with SMARCAD1. Interacts with SMARCA4/BRG1. Interacts with SMYD2. Interacts with SMYD4 (via MYND-type zinc finger). Interacts with SP1; the interaction deacetylates SP1 and regulates its transcriptional activity. Interacts with SP3; the interaction deacetylates SP3 and regulates its transcriptional activity. In vitro, C(18) ceramides increase this interaction and the subsequent SP3 deacetylation and SP3-mediated repression of the TERT promoter. Interacts with SPEN/MINT. Interacts with SPHK2. Interacts with SUV39H1. Interacts with TGIF. Interacts with TGIF2. Interacts with TRAF6. Interacts with TRIM28; the interaction recruits HDAC1 to E2F1 and inhibits its acetylation. Interacts with TSC22D3 isoform 1; this interaction affects HDAC1 activity on MYOG promoter and thus inhibits MYOD1 transcriptional activity. Interacts with UHRF1. Interacts with UHRF2. Interacts with ZBTB7A. Interacts with ZMYND8. Interacts with ZMYND15. Interacts with ZNF431. Interacts with ZNF516; this interaction is enhanced in the presence of PWWP2B. Interacts with ZNF541. Interacts with ZNF638. Interacts with ZNHIT1. Interacts with the non-histone region of MACROH2A1. Identified in a complex with HDAC2, KCTD19, DNTTIP1 and ZNF541. Interacts with MSX3. Interacts with VRK1. Zn(2+) serves as cofactor. Post-translationally, sumoylated on Lys-444 and Lys-476; which promotes enzymatic activity. Desumoylated by SENP1. Phosphorylation on Ser-421 and Ser-423 promotes enzymatic activity and interactions with NuRD and SIN3 complexes. Phosphorylated by CDK5. In terms of processing, ubiquitinated by CHFR and KCTD11, leading to its degradation by the proteasome.

The protein resides in the nucleus. It carries out the reaction N(6)-acetyl-L-lysyl-[histone] + H2O = L-lysyl-[histone] + acetate. It catalyses the reaction N(6)-acetyl-L-lysyl-[protein] + H2O = L-lysyl-[protein] + acetate. The enzyme catalyses N(6)-(2E)-butenoyl-L-lysyl-[protein] + H2O = (2E)-2-butenoate + L-lysyl-[protein]. The catalysed reaction is N(6)-[(S)-lactoyl]-L-lysyl-[protein] + H2O = (S)-lactate + L-lysyl-[protein]. Inositol tetraphosphate (1D-myo-inositol 1,4,5,6-tetrakisphosphate) may act as an intermolecular glue between HDAC1 and N-Cor repressor complex components. In terms of biological role, histone deacetylase that catalyzes the deacetylation of lysine residues on the N-terminal part of the core histones (H2A, H2B, H3 and H4). Histone deacetylation gives a tag for epigenetic repression and plays an important role in transcriptional regulation, cell cycle progression and developmental events. Histone deacetylases act via the formation of large multiprotein complexes. Acts as a component of the histone deacetylase NuRD complex which participates in the remodeling of chromatin. As part of the SIN3B complex is recruited downstream of the constitutively active genes transcriptional start sites through interaction with histones and mitigates histone acetylation and RNA polymerase II progression within transcribed regions contributing to the regulation of transcription. Also functions as a deacetylase for non-histone targets, such as NR1D2, RELA, SP1, SP3, STAT3 and TSHZ3. Deacetylates SP proteins, SP1 and SP3, and regulates their function. Component of the BRG1-RB1-HDAC1 complex, which negatively regulates the CREST-mediated transcription in resting neurons. Upon calcium stimulation, HDAC1 is released from the complex and CREBBP is recruited, which facilitates transcriptional activation. Deacetylates TSHZ3 and regulates its transcriptional repressor activity. Deacetylates 'Lys-310' in RELA and thereby inhibits the transcriptional activity of NF-kappa-B. Deacetylates NR1D2 and abrogates the effect of KAT5-mediated relieving of NR1D2 transcription repression activity. Component of a RCOR/GFI/KDM1A/HDAC complex that suppresses, via histone deacetylase (HDAC) recruitment, a number of genes implicated in multilineage blood cell development. Involved in CIART-mediated transcriptional repression of the circadian transcriptional activator: CLOCK-BMAL1 heterodimer. Required for the transcriptional repression of circadian target genes, such as PER1, mediated by the large PER complex or CRY1 through histone deacetylation. In addition to protein deacetylase activity, also has protein-lysine deacylase activity: acts as a protein decrotonylase and delactylase by mediating decrotonylation ((2E)-butenoyl) and delactylation (lactoyl) of histones, respectively. The protein is Histone deacetylase 1 (HDAC1) of Bos taurus (Bovine).